The primary structure comprises 297 residues: Glutamyl-Q tRNA(Asp) synthetase (297 aa).

L-glutamate is bound by residues Arg7–Ser11 and Glu43. A 'HIGH' region motif is present at residues Pro10–Ser20. Zn(2+) contacts are provided by Cys99, Cys101, Tyr122, and Cys126. L-glutamate contacts are provided by Tyr182 and Arg200. Residues Lys238 to Gln242 carry the 'KMSKS' region motif. Lys241 provides a ligand contact to ATP.

The protein belongs to the class-I aminoacyl-tRNA synthetase family. GluQ subfamily. It depends on Zn(2+) as a cofactor.

In terms of biological role, catalyzes the tRNA-independent activation of glutamate in presence of ATP and the subsequent transfer of glutamate onto a tRNA(Asp). Glutamate is transferred on the 2-amino-5-(4,5-dihydroxy-2-cyclopenten-1-yl) moiety of the queuosine in the wobble position of the QUC anticodon. In Burkholderia pseudomallei (strain K96243), this protein is Glutamyl-Q tRNA(Asp) synthetase.